The sequence spans 284 residues: 8-methylmenaquinol:fumarate reductase membrane anchor subunit (284 aa).

In terms of assembly, the MFR complex is composed of three subunits: a flavoprotein (SdhA), an iron-sulfur protein (SdhB), and one hydrophobic anchor protein (SdhE).

Its subcellular location is the periplasm. It is found in the cell membrane. It catalyses the reaction 8-methylmenaquinone-6 + succinate = 8-methylmenaquinol-6 + fumarate. Functionally, membrane anchor subunit of 8-methylmenaquinol:fumarate reductase (MFR), that catalyzes the reduction of fumarate using 8-methylmenaquinol-6 as electron donor. The complex shows no succinate oxidation activity. Is involved in anaerobic metabolism. SdhE likely contains the quinol/quinone binding site. This is 8-methylmenaquinol:fumarate reductase membrane anchor subunit from Wolinella succinogenes (strain ATCC 29543 / DSM 1740 / CCUG 13145 / JCM 31913 / LMG 7466 / NCTC 11488 / FDC 602W) (Vibrio succinogenes).